A 604-amino-acid polypeptide reads, in one-letter code: Phenylalanine--tRNA ligase beta subunit (604 aa).

In terms of domain architecture, B5 spans 327 to 402 (YFQEKREVAH…LGRTLDRFSP (76 aa)). Positions 380, 386, 389, and 390 each coordinate Mg(2+).

The protein belongs to the phenylalanyl-tRNA synthetase beta subunit family. Type 2 subfamily. As to quaternary structure, tetramer of two alpha and two beta subunits. Mg(2+) serves as cofactor.

The protein localises to the cytoplasm. The enzyme catalyses tRNA(Phe) + L-phenylalanine + ATP = L-phenylalanyl-tRNA(Phe) + AMP + diphosphate + H(+). This is Phenylalanine--tRNA ligase beta subunit from Treponema pallidum subsp. pallidum (strain SS14).